Here is an 80-residue protein sequence, read N- to C-terminus: Small ribosomal subunit protein uS17 (80 aa).

The protein belongs to the universal ribosomal protein uS17 family. As to quaternary structure, part of the 30S ribosomal subunit.

Its function is as follows. One of the primary rRNA binding proteins, it binds specifically to the 5'-end of 16S ribosomal RNA. The protein is Small ribosomal subunit protein uS17 of Microcystis aeruginosa (strain NIES-843 / IAM M-2473).